Consider the following 364-residue polypeptide: Aminomethyltransferase (364 aa).

The protein belongs to the GcvT family. In terms of assembly, the glycine cleavage system is composed of four proteins: P, T, L and H.

It carries out the reaction N(6)-[(R)-S(8)-aminomethyldihydrolipoyl]-L-lysyl-[protein] + (6S)-5,6,7,8-tetrahydrofolate = N(6)-[(R)-dihydrolipoyl]-L-lysyl-[protein] + (6R)-5,10-methylene-5,6,7,8-tetrahydrofolate + NH4(+). In terms of biological role, the glycine cleavage system catalyzes the degradation of glycine. This chain is Aminomethyltransferase, found in Escherichia coli (strain SMS-3-5 / SECEC).